The sequence spans 571 residues: Potassium-transporting ATPase potassium-binding subunit (571 aa).

11 helical membrane-spanning segments follow: residues 5-25 (GWIQ…PLGS), 64-84 (LAYT…LYAI), 136-156 (GLTH…VALI), 179-199 (LYVL…QGIP), 254-274 (LSNL…TNVF), 285-305 (WAIL…TYWA), 330-350 (FGIA…CGAV), 357-376 (FTAL…EIII), 421-441 (MLGI…ATVV), 488-508 (LAIG…AIAG), and 527-547 (GGLF…LTFF).

This sequence belongs to the KdpA family. In terms of assembly, the system is composed of three essential subunits: KdpA, KdpB and KdpC.

Its subcellular location is the cell inner membrane. Its function is as follows. Part of the high-affinity ATP-driven potassium transport (or Kdp) system, which catalyzes the hydrolysis of ATP coupled with the electrogenic transport of potassium into the cytoplasm. This subunit binds the periplasmic potassium ions and delivers the ions to the membrane domain of KdpB through an intramembrane tunnel. This is Potassium-transporting ATPase potassium-binding subunit from Methylobacterium radiotolerans (strain ATCC 27329 / DSM 1819 / JCM 2831 / NBRC 15690 / NCIMB 10815 / 0-1).